The sequence spans 142 residues: MAKKVQAYIKLQVAAGMANPSPPVGPALGQQGVNIMEFCKAFNAKTESVEKGLPIPVVITVYADRSFTFVTKTPPAAILLKKAAGVKSGSGKPNKEKVGKVTTAQVREIAETKAADLTGADVEAMMRSIEGTARSMGLVVED.

It belongs to the universal ribosomal protein uL11 family. As to quaternary structure, part of the ribosomal stalk of the 50S ribosomal subunit. Interacts with L10 and the large rRNA to form the base of the stalk. L10 forms an elongated spine to which L12 dimers bind in a sequential fashion forming a multimeric L10(L12)X complex. One or more lysine residues are methylated.

Functionally, forms part of the ribosomal stalk which helps the ribosome interact with GTP-bound translation factors. This is Large ribosomal subunit protein uL11 from Proteus mirabilis (strain HI4320).